The following is a 266-amino-acid chain: F-box only protein 50 (266 aa).

Residues 1–16 (MEKTQDRDTLSGRMEA) show a composition bias toward basic and acidic residues. Residues 1 to 53 (MEKTQDRDTLSGRMEAEGSLNSEELPPHPQSPPPPPSPRSPTSPVTPELPQPN) form a disordered region. Positions 27–41 (PHPQSPPPPPSPRSP) are enriched in pro residues. A phosphoserine mark is found at Ser-31, Ser-37, Ser-40, and Ser-43. Thr-46 carries the post-translational modification Phosphothreonine. The FBA domain occupies 86 to 264 (LFLERPLYRN…VTDSSVSVQL (179 aa)).

As to expression, strongly expressed in kidney. Weakly expressed in stomach, colon, duodenum and prostate.

The protein localises to the cytoplasm. Promotes cell proliferation. This Mus musculus (Mouse) protein is F-box only protein 50 (Nccrp1).